The chain runs to 251 residues: CCN family member 5 (251 aa).

The N-terminal stretch at 1–23 is a signal peptide; it reads MRGNPLIHLLAISFLCILSMVYS. Residues 24 to 103 enclose the IGFBP N-terminal domain; sequence QLCPAPCACP…EEDDGSCEVN (80 aa). 6 cysteine pairs are disulfide-bonded: Cys-26-Cys-50, Cys-30-Cys-52, Cys-32-Cys-53, Cys-39-Cys-56, Cys-64-Cys-78, and Cys-70-Cys-100. The VWFC domain occupies 98–164; sequence GSCEVNGRRY…GRCCPEWVCD (67 aa). The region spanning 195–239 is the TSP type-1 domain; sequence CPNWSTAWGPCSTTCGLGIATRVSNQNRFCQLEIQRRLCLSRPCL. An N-linked (GlcNAc...) asparagine glycan is attached at Asn-197.

It belongs to the CCN family.

It localises to the secreted. Functionally, may play an important role in modulating bone turnover. Promotes the adhesion of osteoblast cells and inhibits the binding of fibrinogen to integrin receptors. In addition, inhibits osteocalcin production. The polypeptide is CCN family member 5 (Ccn5) (Mus musculus (Mouse)).